The following is a 299-amino-acid chain: Very long chain fatty acid elongase 5 (299 aa).

M1 is modified (N-acetylmethionine). The next 7 helical transmembrane spans lie at 26 to 46, 64 to 84, 112 to 132, 150 to 170, 172 to 192, 205 to 225, and 226 to 246; these read WFLL…LLIV, ILVV…CELV, VLWW…FFIL, MLNI…YFGA, LNSF…VLSM, GQLL…IWPC, and TFPL…IALF. A disordered region spans residues 262-299; it reads RKDHLKDHQNGSKAAVNGHTNSFSPLENNVKPRKLRKD. Positions 279 to 288 are enriched in polar residues; sequence GHTNSFSPLE. Residue S285 is modified to Phosphoserine.

It belongs to the ELO family. ELOVL5 subfamily. As to quaternary structure, interacts with TECR.

It is found in the endoplasmic reticulum membrane. Its subcellular location is the cell projection. It localises to the dendrite. The enzyme catalyses a very-long-chain acyl-CoA + malonyl-CoA + H(+) = a very-long-chain 3-oxoacyl-CoA + CO2 + CoA. It carries out the reaction (6Z,9Z,12Z)-octadecatrienoyl-CoA + malonyl-CoA + H(+) = (8Z,11Z,14Z)-3-oxoeicosatrienoyl-CoA + CO2 + CoA. The catalysed reaction is (9Z,12Z,15Z)-octadecatrienoyl-CoA + malonyl-CoA + H(+) = (11Z,14Z,17Z)-3-oxoeicosatrienoyl-CoA + CO2 + CoA. It catalyses the reaction (9Z)-hexadecenoyl-CoA + malonyl-CoA + H(+) = 3-oxo-(11Z)-octadecenoyl-CoA + CO2 + CoA. The enzyme catalyses (9Z)-octadecenoyl-CoA + malonyl-CoA + H(+) = 3-oxo-(11Z)-eicosenoyl-CoA + CO2 + CoA. It carries out the reaction (11Z)-octadecenoyl-CoA + malonyl-CoA + H(+) = 3-oxo-(13Z)-eicosenoyl-CoA + CO2 + CoA. The catalysed reaction is (9Z,12Z)-octadecadienoyl-CoA + malonyl-CoA + H(+) = (11Z,14Z)-3-oxoicosa-11,14-dienoyl-CoA + CO2 + CoA. It catalyses the reaction (6Z,9Z,12Z,15Z)-octadecatetraenoyl-CoA + malonyl-CoA + H(+) = (8Z,11Z,14Z,17Z)-3-oxoicosatetraenoyl-CoA + CO2 + CoA. The enzyme catalyses (5Z,8Z,11Z,14Z)-eicosatetraenoyl-CoA + malonyl-CoA + H(+) = (7Z,10Z,13Z,16Z)-3-oxodocosatetraenoyl-CoA + CO2 + CoA. It carries out the reaction (5Z,8Z,11Z,14Z,17Z)-eicosapentaenoyl-CoA + malonyl-CoA + H(+) = 3-oxo-(7Z,10Z,13Z,16Z,19Z)-docosapentaenoyl-CoA + CO2 + CoA. It functions in the pathway lipid metabolism; polyunsaturated fatty acid biosynthesis. Its function is as follows. Catalyzes the first and rate-limiting reaction of the four reactions that constitute the long-chain fatty acids elongation cycle. This endoplasmic reticulum-bound enzymatic process allows the addition of 2 carbons to the chain of long- and very long-chain fatty acids (VLCFAs) per cycle. Condensing enzyme that acts specifically toward polyunsaturated acyl-CoA with the higher activity toward C18:3(n-6) acyl-CoA. May participate in the production of monounsaturated and of polyunsaturated VLCFAs of different chain lengths that are involved in multiple biological processes as precursors of membrane lipids and lipid mediators. In conditions where the essential linoleic and alpha linoleic fatty acids are lacking it is also involved in the synthesis of Mead acid from oleic acid. In Pongo abelii (Sumatran orangutan), this protein is Very long chain fatty acid elongase 5.